Reading from the N-terminus, the 126-residue chain is Ribosome-binding factor A (126 aa).

This sequence belongs to the RbfA family. Monomer. Binds 30S ribosomal subunits, but not 50S ribosomal subunits or 70S ribosomes.

It localises to the cytoplasm. One of several proteins that assist in the late maturation steps of the functional core of the 30S ribosomal subunit. Associates with free 30S ribosomal subunits (but not with 30S subunits that are part of 70S ribosomes or polysomes). Required for efficient processing of 16S rRNA. May interact with the 5'-terminal helix region of 16S rRNA. This Geobacillus sp. (strain WCH70) protein is Ribosome-binding factor A.